The following is an 859-amino-acid chain: Autoinducer 2 sensor kinase/phosphatase LuxQ (859 aa).

The next 2 membrane-spanning stretches (helical) occupy residues 15–35 (ATLI…GIFI) and 280–300 (IQHI…ALMS). In terms of domain architecture, Histidine kinase spans 489–711 (KMSHEIRTPI…TFVITLPVKD (223 aa)). Residue histidine 492 is modified to Phosphohistidine; by autocatalysis. The 116-residue stretch at 736–851 (KVLLVEDNHT…ALHEAFVDFK (116 aa)) folds into the Response regulatory domain. Aspartate 785 is modified (4-aspartylphosphate).

In terms of assembly, binds the complex formed by AI-2 and LuxP.

The protein localises to the cell inner membrane. It carries out the reaction ATP + protein L-histidine = ADP + protein N-phospho-L-histidine.. At low cell density, in absence of AI-2 (autoinducer 2), LuxQ has a kinase activity and autophosphorylates on a histidine residue. The phosphoryl group is then transferred to an aspartate residue in the response regulator domain. The phosphoryl group is transferred to LuxU, and ultimately to LuxO. At high cell density, in the presence of AI-2, the kinase activity is inactivated, and the response regulator domain has a phosphatase activity. The chain is Autoinducer 2 sensor kinase/phosphatase LuxQ (luxQ) from Vibrio harveyi (Beneckea harveyi).